The chain runs to 176 residues: Ribose 1,5-bisphosphate phosphokinase PhnN (176 aa).

10–17 (GPSGAGKD) contacts ATP.

The protein belongs to the ribose 1,5-bisphosphokinase family.

The catalysed reaction is alpha-D-ribose 1,5-bisphosphate + ATP = 5-phospho-alpha-D-ribose 1-diphosphate + ADP. The protein operates within metabolic intermediate biosynthesis; 5-phospho-alpha-D-ribose 1-diphosphate biosynthesis; 5-phospho-alpha-D-ribose 1-diphosphate from D-ribose 5-phosphate (route II): step 3/3. Functionally, catalyzes the phosphorylation of ribose 1,5-bisphosphate to 5-phospho-D-ribosyl alpha-1-diphosphate (PRPP). The chain is Ribose 1,5-bisphosphate phosphokinase PhnN from Methylobacterium radiotolerans (strain ATCC 27329 / DSM 1819 / JCM 2831 / NBRC 15690 / NCIMB 10815 / 0-1).